Reading from the N-terminus, the 952-residue chain is Glycine dehydrogenase (decarboxylating) (952 aa).

K696 is subject to N6-(pyridoxal phosphate)lysine.

Belongs to the GcvP family. As to quaternary structure, the glycine cleavage system is composed of four proteins: P, T, L and H. Pyridoxal 5'-phosphate serves as cofactor.

It catalyses the reaction N(6)-[(R)-lipoyl]-L-lysyl-[glycine-cleavage complex H protein] + glycine + H(+) = N(6)-[(R)-S(8)-aminomethyldihydrolipoyl]-L-lysyl-[glycine-cleavage complex H protein] + CO2. Functionally, the glycine cleavage system catalyzes the degradation of glycine. The P protein binds the alpha-amino group of glycine through its pyridoxal phosphate cofactor; CO(2) is released and the remaining methylamine moiety is then transferred to the lipoamide cofactor of the H protein. The chain is Glycine dehydrogenase (decarboxylating) from Pelagibacter ubique (strain HTCC1062).